Consider the following 724-residue polypeptide: Actin-related protein 5 (724 aa).

3 disordered regions span residues glutamine 358–valine 391, threonine 412–leucine 450, and lysine 467–glycine 488. Residues alanine 414–proline 446 show a composition bias toward basic and acidic residues. Serine 542 carries the post-translational modification Phosphoserine.

Belongs to the actin family. ARP5 subfamily. In terms of assembly, component of the INO80 chromatin-remodeling complex. Interacts with EEN. Expressed ubiquitously in seedlings, roots, leaves, buds, flowers and siliques.

It is found in the nucleus. It localises to the nucleoplasm. Its subcellular location is the cytoplasm. Functionally, probable subunit of a chromatin-remodeling complex. Involved in DNA repair. Required for multicellular development of all organs. This Arabidopsis thaliana (Mouse-ear cress) protein is Actin-related protein 5.